The chain runs to 262 residues: R3H domain-containing protein 4 (262 aa).

Disordered regions lie at residues 1–27 (MVAL…PGCL) and 132–155 (YLED…RRED). Residues 146–155 (GRGEDRRRED) are compositionally biased toward basic and acidic residues. Residues 182–245 (METLESWEER…RRQMKVSNRH (64 aa)) enclose the R3H domain.

The protein resides in the nucleus. This Mus musculus (Mouse) protein is R3H domain-containing protein 4 (R3hdm4).